The following is a 502-amino-acid chain: Probable cytosol aminopeptidase (502 aa).

Positions 269 and 274 each coordinate Mn(2+). K281 is a catalytic residue. Positions 292, 351, and 353 each coordinate Mn(2+). R355 is a catalytic residue.

This sequence belongs to the peptidase M17 family. Requires Mn(2+) as cofactor.

Its subcellular location is the cytoplasm. The catalysed reaction is Release of an N-terminal amino acid, Xaa-|-Yaa-, in which Xaa is preferably Leu, but may be other amino acids including Pro although not Arg or Lys, and Yaa may be Pro. Amino acid amides and methyl esters are also readily hydrolyzed, but rates on arylamides are exceedingly low.. It catalyses the reaction Release of an N-terminal amino acid, preferentially leucine, but not glutamic or aspartic acids.. In terms of biological role, presumably involved in the processing and regular turnover of intracellular proteins. Catalyzes the removal of unsubstituted N-terminal amino acids from various peptides. The sequence is that of Probable cytosol aminopeptidase from Vibrio parahaemolyticus serotype O3:K6 (strain RIMD 2210633).